We begin with the raw amino-acid sequence, 736 residues long: Catalase-peroxidase 2 (736 aa).

The N-terminal stretch at 1-23 (MIKKTLPVLILLALSGSFSTAVA) is a signal peptide. Residues 102–223 (WHGAGTYRTY…LAATQMGLIY (122 aa)) constitute a cross-link (tryptophyl-tyrosyl-methioninium (Trp-Tyr) (with M-249)). Histidine 103 serves as the catalytic Proton acceptor. Positions 223–249 (YVNPEGPGGKPDPLASAKDIREAFSRM) form a cross-link, tryptophyl-tyrosyl-methioninium (Tyr-Met) (with W-102). Histidine 264 serves as a coordination point for heme b.

Belongs to the peroxidase family. Peroxidase/catalase subfamily. In terms of assembly, homodimer or homotetramer. Heme b serves as cofactor. In terms of processing, formation of the three residue Trp-Tyr-Met cross-link is important for the catalase, but not the peroxidase activity of the enzyme.

The protein resides in the periplasm. The catalysed reaction is H2O2 + AH2 = A + 2 H2O. The enzyme catalyses 2 H2O2 = O2 + 2 H2O. Bifunctional enzyme with both catalase and broad-spectrum peroxidase activity. This chain is Catalase-peroxidase 2, found in Escherichia coli O157:H7.